A 158-amino-acid chain; its full sequence is Protein BTG2 (158 aa).

Serine 147 bears the Phosphoserine; by MAPK1 and MAPK3 mark. A Phosphoserine; by MAPK14 modification is found at serine 149.

Belongs to the BTG family. As to quaternary structure, interacts with PRKCABP. Interacts with CNOT7 and CNOT8; indicative for an association with the CCR4-NOT complex. Interacts with PIN1, inducing mitochondrial depolarization. In terms of processing, phosphorylated at Ser-147 by MAPK1/ERK2 and MAPK3/ERK1, and at Ser-149 by MAPK14, leading to PIN1-binding and mitochondrial depolarization.

Its function is as follows. Anti-proliferative protein; the function is mediated by association with deadenylase subunits of the CCR4-NOT complex. Activates mRNA deadenylation in a CNOT6 and CNOT7-dependent manner. In vitro can inhibit deadenylase activity of CNOT7 and CNOT8. Involved in cell cycle regulation. Could be involved in the growth arrest and differentiation of the neuronal precursors. Modulates transcription regulation mediated by ESR1. Involved in mitochondrial depolarization and neurite outgrowth. This Homo sapiens (Human) protein is Protein BTG2 (BTG2).